The chain runs to 60 residues: MARLKITQTKSYIGSKQNHRDTLRSLGLKRLNDSVVKEDRPEFRGMVHTVRHLVTVEEVD.

The protein belongs to the universal ribosomal protein uL30 family. Part of the 50S ribosomal subunit.

In Streptomyces griseus subsp. griseus (strain JCM 4626 / CBS 651.72 / NBRC 13350 / KCC S-0626 / ISP 5235), this protein is Large ribosomal subunit protein uL30.